The primary structure comprises 1042 residues: Serine/threonine-protein kinase LATS2 (1042 aa).

The segment at 23-44 (REGLKQPSKASTQGLLVGPNSD) is disordered. Residues 30–44 (SKASTQGLLVGPNSD) are compositionally biased toward polar residues. Phosphoserine; by AURKA is present on S82. A UBA domain is found at 97-138 (EVNRQMLQELVNAGCDQEMAGRALKQTGSRSIEAALEYISKM). An interaction with ubiquitinated AMOTL2 region spans residues 100–140 (RQMLQELVNAGCDQEMAGRALKQTGSRSIEAALEYISKMGY). The interval 237 to 282 (HFPGTHYGRGHLLSEQPGYGVQRSSSFQNKTPPDAYSSMAKAQGGP) is disordered. Over residues 258–267 (QRSSSFQNKT) the composition is skewed to polar residues. A Phosphothreonine modification is found at T267. S362 carries the phosphoserine modification. Disordered stretches follow at residues 378–399 (RAGPSRTNSFNNPQPEPSLPAP), 442–481 (PATESLETKEGSAGPHPLDVDYGGSERRCPPPPYPKHLLL), and 501–550 (QSLR…KRES). The PPxY motif motif lies at 472-475 (PPPY). Over residues 507-530 (TEQDRSDKSHKGAKGDKAGRDKKQ) the composition is skewed to basic and acidic residues. A Phosphoserine modification is found at S534. The segment covering 541 to 550 (NSRDEEKRES) has biased composition (basic and acidic residues). A Protein kinase domain is found at 626–931 (FVKIKTLGIG…ADDLKAHPFF (306 aa)). Residues 632 to 640 (LGIGAFGEV) and K655 contribute to the ATP site. D749 (proton acceptor) is an active-site residue. An AGC-kinase C-terminal domain is found at 932–1010 (NTIDFSRDIR…RRFFDDNGYP (79 aa)). Residue T999 is modified to Phosphothreonine. The segment at 1014–1042 (PKPSEPAESADPGDADLEGAAEGCQPVYV) is disordered.

Belongs to the protein kinase superfamily. AGC Ser/Thr protein kinase family. In terms of assembly, interacts with and is phosphorylated by AURKA. Binds to AR. Interacts with AJUBA during mitosis and this complex regulates organization of the spindle apparatus through recruitment of gamma-tubulin to the centrosome. Interacts (via PPxY motif) with YAP1 (via WW domains). Interacts with MOB1A and MOB1B. Interacts with LIMD1, WTIP and AJUBA. Interacts with SNAI1. Interacts with WWC1, WWC2 and WWC3 (via their WW domains). Interacts (via UBA domain) with ubiquitinated AMOTL2; the interaction promotes LATS2 phosphorylation of YAP1. The cofactor is Mg(2+). Post-translationally, autophosphorylated and phosphorylated during M-phase and the G1/S-phase of the cell cycle. Phosphorylated and activated by STK3/MST2. Phosphorylated by MAP4Ks; in parallel to STK3/MST2 and resulting to its activation. Phosphorylation by NUAK2 may regulate its activity in phosphorylation and inactivation YAP1. In terms of tissue distribution, expressed at high levels in ovary and testis and at lower levels in all other tissues examined.

Its subcellular location is the cytoplasm. The protein resides in the cytoskeleton. It localises to the microtubule organizing center. It is found in the centrosome. The protein localises to the spindle pole. Its subcellular location is the nucleus. It catalyses the reaction L-seryl-[protein] + ATP = O-phospho-L-seryl-[protein] + ADP + H(+). The enzyme catalyses L-threonyl-[protein] + ATP = O-phospho-L-threonyl-[protein] + ADP + H(+). In terms of biological role, negative regulator of YAP1 in the Hippo signaling pathway that plays a pivotal role in organ size control and tumor suppression by restricting proliferation and promoting apoptosis. The core of this pathway is composed of a kinase cascade wherein STK3/MST2 and STK4/MST1, in complex with its regulatory protein SAV1, phosphorylates and activates LATS1/2 in complex with its regulatory protein MOB1, which in turn phosphorylates and inactivates YAP1 oncoprotein and WWTR1/TAZ. Phosphorylation of YAP1 by LATS2 inhibits its translocation into the nucleus to regulate cellular genes important for cell proliferation, cell death, and cell migration. Also phosphorylates YAP1 in response to cell contact inhibition-driven WWP1 ubiquitination of AMOTL2, which results in LATS2 activation. Acts as a tumor suppressor which plays a critical role in centrosome duplication, maintenance of mitotic fidelity and genomic stability. Negatively regulates G1/S transition by down-regulating cyclin E/CDK2 kinase activity. Negative regulator of the androgen receptor. Phosphorylates SNAI1 in the nucleus leading to its nuclear retention and stabilization, which enhances its epithelial-mesenchymal transition and tumor cell invasion/migration activities. This tumor-promoting activity is independent of its effects upon YAP1 or WWTR1/TAZ. Acts as an activator of the NLRP3 inflammasome by mediating phosphorylation of 'Ser-265' of NLRP3 following NLRP3 palmitoylation, promoting NLRP3 activation by NEK7. The polypeptide is Serine/threonine-protein kinase LATS2 (Mus musculus (Mouse)).